A 450-amino-acid chain; its full sequence is Phosphoglucosamine mutase (450 aa).

Ser101 functions as the Phosphoserine intermediate in the catalytic mechanism. Positions 101, 241, 243, and 245 each coordinate Mg(2+). Residue Ser101 is modified to Phosphoserine.

The protein belongs to the phosphohexose mutase family. The cofactor is Mg(2+). Post-translationally, activated by phosphorylation.

The enzyme catalyses alpha-D-glucosamine 1-phosphate = D-glucosamine 6-phosphate. Catalyzes the conversion of glucosamine-6-phosphate to glucosamine-1-phosphate. This chain is Phosphoglucosamine mutase, found in Lysinibacillus sphaericus (strain C3-41).